The following is a 394-amino-acid chain: Guanine nucleotide-binding protein G(s) subunit alpha (394 aa).

The interval 1–23 is disordered; sequence MGCLGNSKTEDQRNEEKAQREAN. Residue Gly-2 is the site of N-palmitoyl glycine attachment. A lipid anchor (S-palmitoyl cysteine) is attached at Cys-3. Residues 8–23 show a composition bias toward basic and acidic residues; the sequence is KTEDQRNEEKAQREAN. Residues 39 to 394 enclose the G-alpha domain; that stretch reads ATHRLLLLGA…RMHLRQYELL (356 aa). Residues 42–55 are G1 motif; sequence RLLLLGAGESGKST. A GTP-binding site is contributed by 47-55; the sequence is GAGESGKST. Ser-54 lines the Mg(2+) pocket. Residues 68-90 are disordered; it reads FNGEGGEEDPQAARSNSDGEKAT. Positions 196-204 are G2 motif; the sequence is DLLRCRVLT. Residues 197-204, 223-227, 292-295, and Ala-366 contribute to the GTP site; these read LLRCRVLT, DVGGQ, and NKQD. Residue Thr-204 coordinates Mg(2+). Positions 219 to 228 are G3 motif; sequence FHMFDVGGQR. Residues 288 to 295 are G4 motif; the sequence is ILFLNKQD. The interval 364-369 is G5 motif; the sequence is TCAVDT.

It belongs to the G-alpha family. G(s) subfamily. Heterotrimeric G proteins are composed of 3 units; alpha, beta and gamma. The alpha chain contains the guanine nucleotide binding site. Interacts with CRY1; the interaction may block GPCR-mediated regulation of cAMP concentrations. Interacts with ADCY6 and stimulates its adenylyl cyclase activity. Interacts with ADCY2 and ADCY5. Stimulates the ADCY5 adenylyl cyclase activity. Interaction with SASH1.

Its subcellular location is the cell membrane. Its function is as follows. Guanine nucleotide-binding proteins (G proteins) function as transducers in numerous signaling pathways controlled by G protein-coupled receptors (GPCRs). Signaling involves the activation of adenylyl cyclases, resulting in increased levels of the signaling molecule cAMP. GNAS functions downstream of several GPCRs, including beta-adrenergic receptors. Stimulates the Ras signaling pathway via RAPGEF2. In Cricetulus griseus (Chinese hamster), this protein is Guanine nucleotide-binding protein G(s) subunit alpha (GNAS).